Consider the following 242-residue polypeptide: Large ribosomal subunit protein uL1 (242 aa).

Belongs to the universal ribosomal protein uL1 family. As to quaternary structure, part of the 50S ribosomal subunit.

In terms of biological role, binds directly to 23S rRNA. The L1 stalk is quite mobile in the ribosome, and is involved in E site tRNA release. Its function is as follows. Protein L1 is also a translational repressor protein, it controls the translation of the L11 operon by binding to its mRNA. In Dictyoglomus thermophilum (strain ATCC 35947 / DSM 3960 / H-6-12), this protein is Large ribosomal subunit protein uL1.